The sequence spans 159 residues: Large ribosomal subunit protein uL10 (159 aa).

This sequence belongs to the universal ribosomal protein uL10 family. Part of the ribosomal stalk of the 50S ribosomal subunit. The N-terminus interacts with L11 and the large rRNA to form the base of the stalk. The C-terminus forms an elongated spine to which L12 dimers bind in a sequential fashion forming a multimeric L10(L12)X complex.

Its function is as follows. Forms part of the ribosomal stalk, playing a central role in the interaction of the ribosome with GTP-bound translation factors. This is Large ribosomal subunit protein uL10 from Campylobacter jejuni (strain RM1221).